Here is a 469-residue protein sequence, read N- to C-terminus: Gustatory receptor for sugar taste 64f (469 aa).

Over 1 to 117 (MKILPKLERK…SFSWRNIRTC (117 aa)) the chain is Cytoplasmic. A helical membrane pass occupies residues 118–138 (FSLLFIASSLANFGLSLFKVL). The Extracellular portion of the chain corresponds to 139–146 (NNPISFNS). A helical transmembrane segment spans residues 147 to 167 (IKPIIFRGSVLLVLIVALNLA). The Cytoplasmic segment spans residues 168-199 (RQWPQLMMYWHTVEKDLPQYKTQLTKWKMGHT). A helical membrane pass occupies residues 200 to 220 (ISMVMLLGMMLSFAEHILSMV). Topologically, residues 221-265 (SAINYASFCNRTADPIQNYFLRTNDEIFFVTSYSTTLALWGKFQN) are extracellular. N-linked (GlcNAc...) asparagine glycosylation occurs at N230. The helical transmembrane segment at 266–286 (VFSTFIWNYMDLFVMIVSIGL) threads the bilayer. The Cytoplasmic segment spans residues 287 to 330 (ASKFRQLNDDLRNFKGMNMAPSYWSERRIQYRNICILCDKMDDA). A helical transmembrane segment spans residues 331–351 (ISLITMVSFSNNLYFICVQLL). At 352 to 353 (RS) the chain is on the extracellular side. The helical transmembrane segment at 354–374 (LNTMPSVAHAVYFYFSLIFLI) threads the bilayer. At 375–435 (GRTLAVSLYS…GMKFFHLTRK (61 aa)) the chain is on the cytoplasmic side. Residues 436–456 (LVLSVAGTIVTYELVLIQFHE) form a helical membrane-spanning segment. Topologically, residues 457 to 469 (DNDLWDCDQSYYS) are extracellular.

The protein belongs to the insect chemoreceptor superfamily. Gustatory receptor (GR) family. Gr5a subfamily. As to expression, expressed in Gr5a-expressing sugar-sensing cells.

It localises to the cell membrane. In terms of biological role, one of the few identified sugar gustatory receptors identified so far and which promotes the starvation-induced increase of feeding motivation. Required in combination with Gr64a to detect sucrose, maltose, and glucose. This Drosophila melanogaster (Fruit fly) protein is Gustatory receptor for sugar taste 64f (Gr64f).